Consider the following 400-residue polypeptide: CCA-adding enzyme (400 aa).

Residues glycine 28 and arginine 31 each contribute to the ATP site. CTP contacts are provided by glycine 28 and arginine 31. The Mg(2+) site is built by aspartate 41 and aspartate 43. ATP-binding residues include arginine 112, aspartate 155, arginine 158, arginine 161, and arginine 164. Residues arginine 112, aspartate 155, arginine 158, arginine 161, and arginine 164 each coordinate CTP.

Belongs to the tRNA nucleotidyltransferase/poly(A) polymerase family. Bacterial CCA-adding enzyme type 3 subfamily. Homodimer. Mg(2+) serves as cofactor.

It catalyses the reaction a tRNA precursor + 2 CTP + ATP = a tRNA with a 3' CCA end + 3 diphosphate. The catalysed reaction is a tRNA with a 3' CCA end + 2 CTP + ATP = a tRNA with a 3' CCACCA end + 3 diphosphate. Catalyzes the addition and repair of the essential 3'-terminal CCA sequence in tRNAs without using a nucleic acid template. Adds these three nucleotides in the order of C, C, and A to the tRNA nucleotide-73, using CTP and ATP as substrates and producing inorganic pyrophosphate. tRNA 3'-terminal CCA addition is required both for tRNA processing and repair. Also involved in tRNA surveillance by mediating tandem CCA addition to generate a CCACCA at the 3' terminus of unstable tRNAs. While stable tRNAs receive only 3'-terminal CCA, unstable tRNAs are marked with CCACCA and rapidly degraded. This Oceanobacillus iheyensis (strain DSM 14371 / CIP 107618 / JCM 11309 / KCTC 3954 / HTE831) protein is CCA-adding enzyme.